A 363-amino-acid chain; its full sequence is Flagellar P-ring protein (363 aa).

The first 20 residues, 1 to 20 (MKLKLILAVAMLAFSLPSQA), serve as a signal peptide directing secretion.

This sequence belongs to the FlgI family. The basal body constitutes a major portion of the flagellar organelle and consists of four rings (L,P,S, and M) mounted on a central rod.

Its subcellular location is the periplasm. The protein localises to the bacterial flagellum basal body. Functionally, assembles around the rod to form the L-ring and probably protects the motor/basal body from shearing forces during rotation. The polypeptide is Flagellar P-ring protein (Shewanella sp. (strain MR-7)).